The chain runs to 76 residues: Conotoxin Im6.9 (76 aa).

The first 19 residues, 1–19 (MEKLTILLLVTAVLMSTQA), serve as a signal peptide directing secretion. A propeptide spanning residues 20–45 (LMQSGIEKRQRAKIKFFSKRKTTAER) is cleaved from the precursor. Intrachain disulfides connect Cys-51-Cys-65, Cys-58-Cys-69, and Cys-64-Cys-73.

Belongs to the conotoxin O2 superfamily. Expressed by the venom duct.

The protein localises to the secreted. Functionally, probable neurotoxin. This chain is Conotoxin Im6.9, found in Conus imperialis (Imperial cone).